A 323-amino-acid chain; its full sequence is Glucokinase (323 aa).

Position 8–13 (8–13 (GDVGGT)) interacts with ATP.

Belongs to the bacterial glucokinase family.

The protein localises to the cytoplasm. It catalyses the reaction D-glucose + ATP = D-glucose 6-phosphate + ADP + H(+). This is Glucokinase from Yersinia enterocolitica serotype O:8 / biotype 1B (strain NCTC 13174 / 8081).